The chain runs to 221 residues: MSQGFERYERQYCEISANLSKKCTSAIALDGEQKKQNLSEIKSGVEEAEALVKKMDLEARNLPPNVKSSLLVKLREYKSDLNNFKTEVKRITSGNLNATARDELLEAGMADTLTASADQRSRLMMSTDHLGRTTDRIKDSRRTILETEELGVSILQDLHGQRQSLLRAHETLHGVDDNVGKSKKILTTMTRRMNRNKWTIGAIITVLVLAIIFILYFKLTR.

The Cytoplasmic portion of the chain corresponds to M1–W198. The stretch at E32–S93 forms a coiled coil. Residues T199 to L219 form a helical; Anchor for type IV membrane protein membrane-spanning segment. Residues T220–R221 lie on the Vesicular side of the membrane.

It belongs to the VTI1 family. As to quaternary structure, forms SNARE complexes with t-SNAREs. In terms of tissue distribution, expressed at low levels in roots, stems, flowers and leaves.

Its subcellular location is the vacuole membrane. It is found in the prevacuolar compartment membrane. The protein localises to the endosome membrane. It localises to the early endosome membrane. In terms of biological role, may function as a v-SNARE responsible for targeting vesicles involved in the secretory pathway. Involved in actin-dependent endosomal trafficking pathways associated with the vacuole within root hairs and root tip epidermal cells. Essential for cell wall organization and polarized root hair growth. Also required for the localization of SYP41 to the trans-Golgi network in root hair cells. The protein is Vesicle transport v-SNARE 13 of Arabidopsis thaliana (Mouse-ear cress).